The chain runs to 161 residues: MENEPDTICILVDADACPVKAEIYRVAERHNLPVVIVANSFIAIPREAQRVERVVVSGNLDAADDWIAEHSRPGAVVVTADIPLASHALEKGASVIAPNGRIHTQSTIGNTLATRNLMDSLRSAGEVTGGPAPFAPKDRSAFLSALDLAIVRLKRAGFHAS.

Belongs to the UPF0178 family.

The protein is UPF0178 protein BruAb1_1955 of Brucella abortus biovar 1 (strain 9-941).